The following is a 218-amino-acid chain: Guanylate kinase (218 aa).

The 184-residue stretch at Gly5–Asn188 folds into the Guanylate kinase-like domain. Residue Ala12–Ser19 coordinates ATP.

The protein belongs to the guanylate kinase family.

The protein resides in the cytoplasm. It carries out the reaction GMP + ATP = GDP + ADP. Essential for recycling GMP and indirectly, cGMP. The protein is Guanylate kinase of Colwellia psychrerythraea (strain 34H / ATCC BAA-681) (Vibrio psychroerythus).